Consider the following 240-residue polypeptide: Lipoprotein-releasing system ATP-binding protein LolD (240 aa).

The ABC transporter domain occupies 15–240 (IRAERLGKTY…GLRELTSAEV (226 aa)). Residue 51–58 (GASGAGKS) coordinates ATP.

Belongs to the ABC transporter superfamily. Lipoprotein translocase (TC 3.A.1.125) family. The complex is composed of two ATP-binding proteins (LolD) and two transmembrane proteins (LolC and LolE).

Its subcellular location is the cell inner membrane. Functionally, part of the ABC transporter complex LolCDE involved in the translocation of mature outer membrane-directed lipoproteins, from the inner membrane to the periplasmic chaperone, LolA. Responsible for the formation of the LolA-lipoprotein complex in an ATP-dependent manner. In Xylella fastidiosa (strain 9a5c), this protein is Lipoprotein-releasing system ATP-binding protein LolD.